A 4753-amino-acid chain; its full sequence is Dynein heavy chain domain-containing protein 1 (4753 aa).

Coiled coils occupy residues 826–858 and 936–991; these read IHAI…ALHE and KLQQ…LSEL. Residues 2688–2766 are disordered; the sequence is HLGKDHQESE…SRGMKESISH (79 aa). Residues 2695-2712 are compositionally biased toward acidic residues; sequence ESEEEEEEERVPEVESEG. Residues 2740–2751 show a composition bias toward polar residues; it reads RVSNSRDPSLTP. 3 coiled-coil regions span residues 3125-3227, 3590-3651, and 4431-4460; these read LQQQ…MSKA, MRNQ…QGSK, and GAQL…LTHV. The segment at 3580-3657 is disordered; it reads ALTEGRGKGL…QGSKPAYETQ (78 aa). Residues 3602 to 3615 are compositionally biased toward acidic residues; sequence KEEDDESEESNEAE. Residues 3616–3631 show a composition bias toward basic and acidic residues; sequence DQTKEQKAEERKNEQE. Residues 3632 to 3641 show a composition bias toward acidic residues; it reads KEQEENEEKE. Residues 4669 to 4697 are disordered; the sequence is ALQDSPSSQPSPLPPVSISTQAPGTSDLP.

The protein belongs to the dynein heavy chain family. As to expression, expressed in spermatozoa (at protein level).

The protein resides in the cell projection. It is found in the cilium. Its subcellular location is the flagellum. Functionally, essential for the normal assembly and function of sperm flagella axonemes. The protein is Dynein heavy chain domain-containing protein 1 (DNHD1) of Homo sapiens (Human).